Here is a 297-residue protein sequence, read N- to C-terminus: Phosphatidylglycerol--prolipoprotein diacylglyceryl transferase (297 aa).

Transmembrane regions (helical) follow at residues 17-37 (LAVR…IVVG), 59-79 (MLFY…VLFY), and 97-117 (GGMS…LFAW). Residue Arg-142 participates in a 1,2-diacyl-sn-glycero-3-phospho-(1'-sn-glycerol) binding. 2 helical membrane-spanning segments follow: residues 230-250 (MGAV…TVEF) and 257-277 (FLGL…PMIV).

The protein belongs to the Lgt family.

The protein localises to the cell inner membrane. It carries out the reaction L-cysteinyl-[prolipoprotein] + a 1,2-diacyl-sn-glycero-3-phospho-(1'-sn-glycerol) = an S-1,2-diacyl-sn-glyceryl-L-cysteinyl-[prolipoprotein] + sn-glycerol 1-phosphate + H(+). It functions in the pathway protein modification; lipoprotein biosynthesis (diacylglyceryl transfer). Functionally, catalyzes the transfer of the diacylglyceryl group from phosphatidylglycerol to the sulfhydryl group of the N-terminal cysteine of a prolipoprotein, the first step in the formation of mature lipoproteins. The polypeptide is Phosphatidylglycerol--prolipoprotein diacylglyceryl transferase (Burkholderia multivorans (strain ATCC 17616 / 249)).